The chain runs to 34 residues: Mu-theraphotoxin-Pspp1 (34 aa).

3 disulfides stabilise this stretch: cysteine 2–cysteine 17, cysteine 9–cysteine 22, and cysteine 16–cysteine 29. Phenylalanine amide is present on phenylalanine 34.

The protein belongs to the neurotoxin 10 (Hwtx-1) family. Expressed by the venom gland.

The protein resides in the secreted. In terms of biological role, voltage-gated sodium channel inhibitor. It is unclear if it selectively inhibits Nav1.7/SCN9A or shows similar potency on all sodium channels tested. According to Escoubas et al., 2006 and Nicolas et al., 2019, it is selective over Nav1.7/SCN9A (90% inhibition at 1 uM), versus Nav1.4 and Nav1.6 (35% inhibition), and shows a small inhibition on all other sodium channels (except Nav1.8/SCN10A). According to Goncalves et al., 2019, it shows a similar inhibition on almost all sodium channels tested (Nav1.1/SCN1A (IC(50)=280.3 nM), Nav1.2/SCN2A (IC(50)=73.7 nM), Nav1.3/SCN3A (IC(50)=201.5 nM), Nav1.4/SCN4A (IC(50)&gt;2100 nM), Nav1.5/SCN5A (IC(50)=710.6 nM), Nav1.6/SCN8A (IC(50)=491.2 nM), and Nav1.7/SCN9A (IC(50)=254.3-260 nM)), except Nav1.8/SCN10A. The voltage-dependence of steady-state Nav1.7/SCN9A channel activation and inactivation are not affected, suggesting that is does not act as a gating-modifier toxin but rather blocks or impedes ion flux through the channel pore. The toxin effect is partial and poorly reversible. In addition to its inhibition to sodium channels, it also shows a small inhibition on rat Kv3.4/KCNC4 potassium channels (20% inhibition at 1 uM). In vivo, when tested on pain models, it shows analgesic activity. The chain is Mu-theraphotoxin-Pspp1 from Phlogiellus sp. (Tarantula).